The primary structure comprises 337 residues: Glucan endo-1,3-beta-glucosidase, basic isoform 1 (337 aa).

The active-site Proton donor is Glu94. The Nucleophile role is filled by Glu239. A propeptide spans 315-337 (removed in mature form); sequence VSERVWDISAETNSTASSLISEM. Residue Asn327 is glycosylated (N-linked (GlcNAc...) asparagine).

Belongs to the glycosyl hydrolase 17 family.

It localises to the vacuole. It carries out the reaction Hydrolysis of (1-&gt;3)-beta-D-glucosidic linkages in (1-&gt;3)-beta-D-glucans.. Its function is as follows. Is thought to be an important plant defense-related product against fungal pathogens. The protein is Glucan endo-1,3-beta-glucosidase, basic isoform 1 (GLUB1) of Solanum tuberosum (Potato).